The primary structure comprises 151 residues: Putative pre-16S rRNA nuclease (151 aa).

The protein belongs to the YqgF nuclease family.

It localises to the cytoplasm. Functionally, could be a nuclease involved in processing of the 5'-end of pre-16S rRNA. This is Putative pre-16S rRNA nuclease from Chlamydia pneumoniae (Chlamydophila pneumoniae).